The chain runs to 316 residues: PDZ and LIM domain protein 3 (316 aa).

The PDZ domain maps to 1–84; that stretch reads MPQNVVLPGP…QLCLKIDRAE (84 aa). Phosphoserine is present on residues Ser-18 and Ser-93. Arg-164 bears the Omega-N-methylarginine mark. Residues 244-303 form the LIM zinc-binding domain; that stretch reads PLCDKCGSGIVGAVVKARDKYRHPECFVCADCNLNLKQKGYFFVEGELYCETHARARTRP.

As to quaternary structure, interacts with ACTN2. Forms a heterodimer with PDLIM4 (via LIM domain).

It localises to the cytoplasm. It is found in the myofibril. The protein localises to the sarcomere. The protein resides in the z line. In terms of biological role, may play a role in the organization of actin filament arrays within muscle cells. In Mus musculus (Mouse), this protein is PDZ and LIM domain protein 3 (Pdlim3).